We begin with the raw amino-acid sequence, 352 residues long: Holliday junction branch migration complex subunit RuvB (352 aa).

The interval 1–42 is disordered; sequence MAIVSSSAGRADSQPPAAKSRVVDASPLPEEASPAREDGLRP. A large ATPase domain (RuvB-L) region spans residues 13-201; sequence SQPPAAKSRV…FGLIQRLEFY (189 aa). A compositionally biased stretch (basic and acidic residues) spans 33–42; the sequence is SPAREDGLRP. ATP is bound by residues Leu40, Arg41, Gly82, Lys85, Thr86, Thr87, Arg191, Tyr201, and Arg238. Thr86 lines the Mg(2+) pocket. The segment at 202–273 is small ATPAse domain (RuvB-S); sequence GLEDLQAIVE…LVDEALTLHR (72 aa). A head domain (RuvB-H) region spans residues 276–352; it reads ARGLDASDRR…RRHLGWPELP (77 aa). 2 residues coordinate DNA: Arg331 and Arg336.

It belongs to the RuvB family. As to quaternary structure, homohexamer. Forms an RuvA(8)-RuvB(12)-Holliday junction (HJ) complex. HJ DNA is sandwiched between 2 RuvA tetramers; dsDNA enters through RuvA and exits via RuvB. An RuvB hexamer assembles on each DNA strand where it exits the tetramer. Each RuvB hexamer is contacted by two RuvA subunits (via domain III) on 2 adjacent RuvB subunits; this complex drives branch migration. In the full resolvosome a probable DNA-RuvA(4)-RuvB(12)-RuvC(2) complex forms which resolves the HJ.

Its subcellular location is the cytoplasm. The catalysed reaction is ATP + H2O = ADP + phosphate + H(+). Its function is as follows. The RuvA-RuvB-RuvC complex processes Holliday junction (HJ) DNA during genetic recombination and DNA repair, while the RuvA-RuvB complex plays an important role in the rescue of blocked DNA replication forks via replication fork reversal (RFR). RuvA specifically binds to HJ cruciform DNA, conferring on it an open structure. The RuvB hexamer acts as an ATP-dependent pump, pulling dsDNA into and through the RuvAB complex. RuvB forms 2 homohexamers on either side of HJ DNA bound by 1 or 2 RuvA tetramers; 4 subunits per hexamer contact DNA at a time. Coordinated motions by a converter formed by DNA-disengaged RuvB subunits stimulates ATP hydrolysis and nucleotide exchange. Immobilization of the converter enables RuvB to convert the ATP-contained energy into a lever motion, pulling 2 nucleotides of DNA out of the RuvA tetramer per ATP hydrolyzed, thus driving DNA branch migration. The RuvB motors rotate together with the DNA substrate, which together with the progressing nucleotide cycle form the mechanistic basis for DNA recombination by continuous HJ branch migration. Branch migration allows RuvC to scan DNA until it finds its consensus sequence, where it cleaves and resolves cruciform DNA. The chain is Holliday junction branch migration complex subunit RuvB from Prochlorococcus marinus (strain MIT 9303).